A 432-amino-acid chain; its full sequence is Protein prenyltransferase alpha subunit repeat-containing protein 1-A (432 aa).

PFTA repeat units follow at residues 86 to 119 (ELIDVTCTLLLLNPDFTTAWNVRKELIQSGTLNP), 121 to 154 (KDLQLGKLALTKFPKSPETWIHRRWALQRLVQEL), 179 to 212 (EEMHVCCEAAGRYPSNYNSWSHRIWVVQHLGNLK), 218 to 251 (DELSSTKHWVSMHVSDHSGFHYRQFLLKSLLSKT), 294 to 327 (EEMDLNRELVDSFPGHETLWCHRRQIFNLIHQLL), and 395 to 432 (SFDSELRFINCVLTNCCSPEQSRFAASYRKWLLSLQGH).

It belongs to the protein prenyltransferase subunit alpha family.

This is Protein prenyltransferase alpha subunit repeat-containing protein 1-A (ptar1-a) from Xenopus laevis (African clawed frog).